A 167-amino-acid polypeptide reads, in one-letter code: Small ribosomal subunit protein uS5 (167 aa).

The region spanning 12–75 is the S5 DRBM domain; it reads LEDQVVSINR…DAAKKSLIEV (64 aa).

This sequence belongs to the universal ribosomal protein uS5 family. Part of the 30S ribosomal subunit. Contacts proteins S4 and S8.

In terms of biological role, with S4 and S12 plays an important role in translational accuracy. Located at the back of the 30S subunit body where it stabilizes the conformation of the head with respect to the body. The sequence is that of Small ribosomal subunit protein uS5 from Lacticaseibacillus paracasei (strain ATCC 334 / BCRC 17002 / CCUG 31169 / CIP 107868 / KCTC 3260 / NRRL B-441) (Lactobacillus paracasei).